The following is a 341-amino-acid chain: Ribosomal RNA small subunit methyltransferase H (341 aa).

S-adenosyl-L-methionine-binding positions include 47–49 (GGY), Asp64, Phe91, Asp109, and Gln116.

Belongs to the methyltransferase superfamily. RsmH family.

The protein resides in the cytoplasm. It carries out the reaction cytidine(1402) in 16S rRNA + S-adenosyl-L-methionine = N(4)-methylcytidine(1402) in 16S rRNA + S-adenosyl-L-homocysteine + H(+). Functionally, specifically methylates the N4 position of cytidine in position 1402 (C1402) of 16S rRNA. The polypeptide is Ribosomal RNA small subunit methyltransferase H (Rhizobium etli (strain ATCC 51251 / DSM 11541 / JCM 21823 / NBRC 15573 / CFN 42)).